A 987-amino-acid chain; its full sequence is Collagen alpha-1(I) chain (987 aa).

The tract at residues 1-987 (GPMGPSGPRG…PGPPGPPGPP (987 aa)) is disordered. Positions 20–39 (PQGFQGPPGEPGEPGASGPM) are enriched in low complexity. Positions 51 to 65 (NGDDGEAGKPGRPGE) are enriched in basic and acidic residues. S93 bears the Phosphoserine mark. Composition is skewed to low complexity over residues 101–117 (DAGPAGPKGEPGSPGEN) and 141–153 (AGARGNDGATGAA). Over residues 155–167 (PPGPTGPAGPPGF) the composition is skewed to pro residues. 10 stretches are compositionally biased toward low complexity: residues 201–251 (AGAA…APGP), 354–380 (KGITGSPGSPGPDGKTGPPGPAGQDGR), 389–408 (ARGQAGVMGFPGPKGAAGEP), 422–444 (AVGAPGKDGEAGAPGATGPAGPA), 516–543 (NGAPGNDGAKGDAGAPGAPGSQGAPGIQ), 602–614 (PNGPAGPTGARGA), 627–654 (AGFAGPPGADGQPGAKGEPGDAGAKGDA), 662–677 (PTGAPGPIGNVGAPGP), 686–696 (ATGFPGAAGRV), and 737–752 (SGEKGSPGADGPAGAP). Residues 756-765 (GPQGIGGQRG) show a composition bias toward gly residues. Residues 799–809 (PPGPMGPPGIA) show a composition bias toward pro residues. Residues 811–826 (PPGESGREGSPGAEGS) show a composition bias toward low complexity. Pro residues predominate over residues 845–860 (AGPPGAPGAPGAPGPV). Residues 896–907 (RGDKGETGEQGD) show a composition bias toward basic and acidic residues. The segment covering 923 to 956 (PGEQGPSGASGPAGPRGPPGSAGAPGKDGINGIP) has biased composition (low complexity). The segment covering 972-987 (VGPPGPPGPPGPPGPP) has biased composition (pro residues).

It belongs to the fibrillar collagen family. As to quaternary structure, trimers of one alpha 2(I) and two alpha 1(I) chains. Post-translationally, prolines at the third position of the tripeptide repeating unit (G-X-Y) are hydroxylated in some or all of the chains. In terms of tissue distribution, forms the fibrils of tendon, ligaments and bones. In bones, the fibrils are mineralized with calcium hydroxyapatite.

The protein localises to the secreted. The protein resides in the extracellular space. Its subcellular location is the extracellular matrix. Functionally, type I collagen is a member of group I collagen (fibrillar forming collagen). This Orycteropus afer (Aardvark) protein is Collagen alpha-1(I) chain.